We begin with the raw amino-acid sequence, 234 residues long: Phosphoribosylaminoimidazole-succinocarboxamide synthase (234 aa).

The protein belongs to the SAICAR synthetase family.

It catalyses the reaction 5-amino-1-(5-phospho-D-ribosyl)imidazole-4-carboxylate + L-aspartate + ATP = (2S)-2-[5-amino-1-(5-phospho-beta-D-ribosyl)imidazole-4-carboxamido]succinate + ADP + phosphate + 2 H(+). It participates in purine metabolism; IMP biosynthesis via de novo pathway; 5-amino-1-(5-phospho-D-ribosyl)imidazole-4-carboxamide from 5-amino-1-(5-phospho-D-ribosyl)imidazole-4-carboxylate: step 1/2. This chain is Phosphoribosylaminoimidazole-succinocarboxamide synthase, found in Staphylococcus carnosus (strain TM300).